Reading from the N-terminus, the 248-residue chain is Pyridoxine 5'-phosphate synthase (248 aa).

Asparagine 12 lines the 3-amino-2-oxopropyl phosphate pocket. 14-15 is a binding site for 1-deoxy-D-xylulose 5-phosphate; sequence DH. Arginine 23 lines the 3-amino-2-oxopropyl phosphate pocket. Histidine 48 acts as the Proton acceptor in catalysis. 1-deoxy-D-xylulose 5-phosphate contacts are provided by arginine 50 and histidine 55. The Proton acceptor role is filled by glutamate 75. Threonine 105 is a 1-deoxy-D-xylulose 5-phosphate binding site. The active-site Proton donor is the histidine 196. 3-amino-2-oxopropyl phosphate contacts are provided by residues glycine 197 and 218–219; that span reads GH.

This sequence belongs to the PNP synthase family. In terms of assembly, homooctamer; tetramer of dimers.

It is found in the cytoplasm. It catalyses the reaction 3-amino-2-oxopropyl phosphate + 1-deoxy-D-xylulose 5-phosphate = pyridoxine 5'-phosphate + phosphate + 2 H2O + H(+). The protein operates within cofactor biosynthesis; pyridoxine 5'-phosphate biosynthesis; pyridoxine 5'-phosphate from D-erythrose 4-phosphate: step 5/5. Catalyzes the complicated ring closure reaction between the two acyclic compounds 1-deoxy-D-xylulose-5-phosphate (DXP) and 3-amino-2-oxopropyl phosphate (1-amino-acetone-3-phosphate or AAP) to form pyridoxine 5'-phosphate (PNP) and inorganic phosphate. This Pseudomonas aeruginosa (strain UCBPP-PA14) protein is Pyridoxine 5'-phosphate synthase.